We begin with the raw amino-acid sequence, 601 residues long: Elongation factor 4 (601 aa).

A tr-type G domain is found at 6 to 188 (NYIRNFSIVA…AIVTQLPSPR (183 aa)). GTP is bound by residues 18–23 (DHGKST) and 135–138 (NKVD).

It belongs to the TRAFAC class translation factor GTPase superfamily. Classic translation factor GTPase family. LepA subfamily.

The protein resides in the cell inner membrane. The catalysed reaction is GTP + H2O = GDP + phosphate + H(+). Its function is as follows. Required for accurate and efficient protein synthesis under certain stress conditions. May act as a fidelity factor of the translation reaction, by catalyzing a one-codon backward translocation of tRNAs on improperly translocated ribosomes. Back-translocation proceeds from a post-translocation (POST) complex to a pre-translocation (PRE) complex, thus giving elongation factor G a second chance to translocate the tRNAs correctly. Binds to ribosomes in a GTP-dependent manner. In Bartonella henselae (strain ATCC 49882 / DSM 28221 / CCUG 30454 / Houston 1) (Rochalimaea henselae), this protein is Elongation factor 4.